A 364-amino-acid chain; its full sequence is Transcription factor SPEECHLESS (364 aa).

Positions 35-109 (GEISPTAAST…QKMSHVTVER (75 aa)) are disordered. S38 is subject to Phosphoserine; by ASK7. Position 40 is a phosphothreonine; by ASK7 (T40). Polar residues predominate over residues 40–53 (TAASTPKDGTTSSK). Phosphoserine; by ASK7 is present on S43. The residue at position 44 (T44) is a Phosphothreonine; by ASK7. S65 carries the phosphoserine; by ASK7 modification. The segment covering 79 to 92 (EDEEEEDGDGEAEE) has biased composition (acidic residues). The interval 99-112 (QQKMSHVTVERNRR) is basic motif. The 52-residue stretch at 99–150 (QQKMSHVTVERNRRKQMNEHLTVLRSLMPCFYVKRGDQASIIGGVVEYISEL) folds into the bHLH domain. The segment at 113-150 (KQMNEHLTVLRSLMPCFYVKRGDQASIIGGVVEYISEL) is helix-loop-helix motif. A Phosphoserine; by ASK7 modification is found at S171. Residues 171 to 227 (SPRVVPSPRPSPPVLSPRKPPLSPRINHHQIHHHLLLPPISPRTPQPTSPYRAIPPQ) are disordered. The span at 175-193 (VPSPRPSPPVLSPRKPPLS) shows a compositional bias: pro residues. S177 is subject to Phosphoserine; by ASK7, MPK3 and MPK6. S181 carries the phosphoserine; by ASK7 modification. S186 is modified (phosphoserine; by CDKA-1, ASK7, MPK3 and MPK6). S193 is modified (phosphoserine; by MPK3 and MPK6). A compositionally biased stretch (basic residues) spans 196-205 (INHHQIHHHL). The segment covering 209–218 (PISPRTPQPT) has biased composition (pro residues). Phosphoserine; by MPK3 and MPK6 is present on S211. At T214 the chain carries Phosphothreonine; by ASK7, MPK3 and MPK6. S219 is modified (phosphoserine; by ASK7, MPK3 and MPK6).

In terms of assembly, homodimer. Forms dimers with SCRM and SCRM2. May interact with CDKA-1. Post-translationally, phosphorylated by ASK7/BIN2 and ASK3/SK12; this post-translational modification inhibits activity and limit epidermal cell proliferation. Phosphorylation by MPK3 and MPK6 leads to the inhibition of stomatal fate and to degradation. Stabilized by CDKA-1-mediated phosphorylation at Ser-186 which promotes stomatal development. Expressed in developing leaf epidermis. Reduced accumulation in the stomatal lineage ground cells (SLGCs) where BASL is polarized in the cell cortex. Observed in small cells of non-protruding hypocotyl cell files and of developing cotyledon epidermis. Restricted to meristemoids (stomatal precursor cell) in leaves epidermis, mostly in dividing cells of non-protruding cell files.

The protein localises to the nucleus. With respect to regulation, negatively regulated through phosphorylation by the MAPK module. Activity is constrained by polarized BASL in stomatal lineage ground cells (SLGCs) undergoing ACD. Transcription factor acting as an integration node for stomata and brassinosteroid (BR) signaling pathways to control stomatal initiation and development. Activates transcription when in the presence of SCRM/ICE1. Functions as a dimer with SCRM or SCRM2 during stomatal initiation. Required for the initiation, the spacing and the formation of stomata, by promoting the first asymmetric cell divisions. Together with FMA and MUTE, modulates the stomata formation. Involved in the regulation of growth reduction under osmotic stress (e.g. mannitol), associated with a quick decrease of meristemoid mother cells (MMCs) number lower stomatal index and density. The protein is Transcription factor SPEECHLESS of Arabidopsis thaliana (Mouse-ear cress).